A 218-amino-acid chain; its full sequence is Leucine-rich repeat protein 2 (218 aa).

A signal peptide spans methionine 1–alanine 27. 5 LRR repeats span residues histidine 69 to leucine 93, glutamate 94 to leucine 117, serine 119 to leucine 141, lysine 142 to isoleucine 165, and serine 167 to histidine 190.

Functionally, probably involved in plant defense response. This chain is Leucine-rich repeat protein 2, found in Arabidopsis thaliana (Mouse-ear cress).